The primary structure comprises 86 residues: Large ribosomal subunit protein bL27 (86 aa).

This sequence belongs to the bacterial ribosomal protein bL27 family.

In Xanthomonas campestris pv. campestris (strain 8004), this protein is Large ribosomal subunit protein bL27.